Here is an 864-residue protein sequence, read N- to C-terminus: Dynamin-1 (864 aa).

The region spanning 28–294 (DLDLPQIAVV…LTNHIRDTLP (267 aa)) is the Dynamin-type G domain. The interval 38–45 (GGQSAGKS) is G1 motif. The GDP site is built by Ser-41, Gly-43, Lys-44, Ser-45, Ser-46, Arg-59, and Gly-60. Residues 64-66 (VTR) form a G2 motif region. Position 80 is a phosphotyrosine (Tyr-80). Tyr-125 is modified (3'-nitrotyrosine; alternate). Tyr-125 bears the Phosphotyrosine; alternate mark. The interval 136–139 (DLPG) is G3 motif. The segment at 205-208 (TKLD) is G4 motif. 6 residues coordinate GDP: Lys-206, Asp-208, Asp-211, Asn-236, Arg-237, and Gln-239. Positions 235 to 238 (VNRS) are G5 motif. 2 positions are modified to phosphoserine: Ser-306 and Ser-347. A Phosphotyrosine modification is found at Tyr-354. Ser-512 carries the post-translational modification Phosphoserine. In terms of domain architecture, PH spans 519–625 (LVIRKGWLTI…WKASFLRAGV (107 aa)). The 92-residue stretch at 659-750 (VETIRNLVDS…IIGDINTTTV (92 aa)) folds into the GED domain. Positions 767 to 864 (SVPAGRRSPT…PESPRPPFDL (98 aa)) are disordered. Residue Ser-774 is modified to Phosphoserine; by GSK3-beta. Ser-778 is modified (phosphoserine). Omega-N-methylarginine is present on Arg-796. Ser-822 is subject to Phosphoserine. Residues 825 to 843 (PFGPPPQVPSRPNRAPPGV) show a composition bias toward pro residues. Ser-851 and Ser-857 each carry phosphoserine.

The protein belongs to the TRAFAC class dynamin-like GTPase superfamily. Dynamin/Fzo/YdjA family. In terms of assembly, homodimer; homodimerization is mediated by the dynamin-type G domain which promotes assembly-stimulated GTPase activity. Homo-tetramer formed from two dimers in the absence of lipid. Oligomerizes into a helical polymer that self-assembles around the vesicle membrane, when associated to the menbrane through lipid binding. Interacts (via C-terminal proline-rich domain (PRD)) with SNX9 (via SH3 domain); this interaction allows regulation of DNM1 self-assembly during late stages of endocytic vesicle formation and supports DNM1's early functions in accelerating clathrin-coated pits (CCPs) maturation in non neuronals cell. Interacts (via C-terminal proline-rich domain (PRD)) with MYO1E (via SH3 domain); this interaction regulates receptor-mediated endocytosis. Interacts with SNX33 (via SH3 domain); this interaction decreases DNM1-dependent endocytosis. Interacts with DIAPH1. Interacts with GRB2 (via SH3 domain); this interaction mediates disassembly of DNM1 polymers, therefore modulates self-assembly. Forms a complex with BIN1 (via SH3 domain) and SH3GL2 (via SH3 domain). Forms a complex with SH3GL2 (via SH3 domain) and AMPH (via SH3 domain). Forms a complex with SH3GL2 (via SH3 domain) and SYNJ1. Interacts with AMPH. Interacts (via C-terminal proline-rich domain (PRD)) with SYT1; this interaction facilitates vesicle fission during clathrin-mediated endocytosis (CME). Interacts (via C-terminal proline-rich domain (PRD)) with PLCG1 (via SH3 domain); this interaction stimulates the release of GDP from DNM1 and enhances DNM1-dependent endocytosis. Interacts with SNPH; this interaction inhibits the binding of DNM1 to AMPH and DNM1-receptor-mediated endocytosis. Interacts with CAV1. Interacts with SH3GLB1 (via SH3 domain). Interacts with PACSIN1 (via SH3 domain), PACSIN2 (via SH3 domain) and PACSIN3 (via SH3 domain). Interacts with UNC119; this interaction decreases DNM1's GTPase activity and affects DNM1's interaction with AMPH. Interacts (GTP-bound form) with DNAJC6; this interaction allows clathrin-coated vesicle (CCV) formation at the plasma membrane. Post-translationally, phosphorylation at Ser-774 by GSK3B/GSK3-beta leads to inactivation of receptor-mediated endocytosis in non-neuronal cells. Dephosphorylation at Ser-774, through the EGFR downstream signaling, leads to activation and regulates early stages of clathrin-mediated endocytosis (CME). Phosphorylated by CDK5 leading to synaptic vesicle endocytosis (SVE) activation.

It is found in the cell membrane. Its subcellular location is the membrane. The protein localises to the clathrin-coated pit. The protein resides in the cytoplasmic vesicle. It localises to the presynapse. It is found in the secretory vesicle. Its subcellular location is the chromaffin granule. It carries out the reaction GTP + H2O = GDP + phosphate + H(+). GTPase activity is activated by 1-phosphatidyl-1D-myo-inositol 4,5-bisphosphate. GTPase activity is inhibited by the heterodimer G protein formed by GNB1 and GNG2 with an IC(50)=400 nM when DNM1 concentration is 5 nM. Catalyzes the hydrolysis of GTP and utilizes this energy to mediate vesicle scission and participates in many forms of endocytosis, such as clathrin-mediated endocytosis or synaptic vesicle endocytosis as well as rapid endocytosis (RE). Associates to the membrane, through lipid binding, and self-assembles into rings and stacks of interconnected rings through oligomerization to form a helical polymer around the vesicle membrane leading to constriction of invaginated coated pits around their necks. Self-assembly of the helical polymer induces membrane tubules narrowing until the polymer reaches a length sufficient to trigger GTP hydrolysis. Depending on the curvature imposed on the tubules, membrane detachment from the helical polymer upon GTP hydrolysis can cause spontaneous hemifission followed by complete fission. May play a role in regulating early stages of clathrin-mediated endocytosis in non-neuronal cells through its activation by dephosphorylation via the signaling downstream of EGFR. Controls vesicle size at a step before fission, during formation of membrane pits, at hippocampal synapses. Controls plastic adaptation of the synaptic vesicle recycling machinery to high levels of activity. Mediates rapid endocytosis (RE), a Ca(2+)-dependent and clathrin- and K(+)-independent process in chromaffin cells. Microtubule-associated force-producing protein involved in producing microtubule bundles and able to bind and hydrolyze GTP. Through its interaction with DNAJC6, acts during the early steps of clathrin-coated vesicle (CCV) formation. The chain is Dynamin-1 from Homo sapiens (Human).